The following is a 312-amino-acid chain: MNTSTFNLDHCIEKLQKCEILPESTIKEITDKMKELLISESNVQEIRSPVTVVGDVHGQFYDVLEIFKIGGQCPDTNYLFLGDYVDRGYHSVETISLLTCLKLRYPSRITLLRGNHESRQITQVYGFYGECMRKYGNPTVWKYFTEMFDYLSVAAIIDEAIYCVHGGLSPSALSIDQIKVLDRFQEVPNEGALSDILWSDPDPDREGFVESQRGAGYSYGKDVTLRFLQNNKMQHIIRAHQLCMDGYQTLFDNKLSTVWSAPNYCNRCGNMASIVEVNEKLERYFNTYAAAPQSLSNKPTLDTNKELPDYFL.

Mn(2+)-binding residues include aspartate 55, histidine 57, aspartate 83, and asparagine 115. Histidine 116 acts as the Proton donor in catalysis. Residues histidine 165 and histidine 240 each coordinate Mn(2+).

Belongs to the PPP phosphatase family. PP-2A subfamily. Component of the Sca1 complex composed of at least gefA, gefH, scaA, phr, and the protein phosphatase 2A subunits pppA and pho2B. Requires Mn(2+) as cofactor.

The protein localises to the cell membrane. The catalysed reaction is O-phospho-L-seryl-[protein] + H2O = L-seryl-[protein] + phosphate. The enzyme catalyses O-phospho-L-threonyl-[protein] + H2O = L-threonyl-[protein] + phosphate. Component of the Sca1 complex, a regulator of cell motility, chemotaxis and signal relay. The Sca1 complex is recruited to the plasma membrane in a chemoattractant- and F-actin-dependent manner and is enriched at the leading edge of chemotaxing cells where it regulates F-actin dynamics and signal relay by controlling the activation of rasC and the downstream target of rapamycin complex 2 (TORC2)-Akt/protein kinase B (PKB) pathway. In Dictyostelium discoideum (Social amoeba), this protein is Protein phosphatase 2A catalytic subunit B.